Consider the following 312-residue polypeptide: tRNA-cytidine(32) 2-sulfurtransferase (312 aa).

The short motif at 48–53 is the PP-loop motif element; it reads SGGKDS. [4Fe-4S] cluster is bound by residues C123, C126, and C214.

It belongs to the TtcA family. In terms of assembly, homodimer. Mg(2+) serves as cofactor. Requires [4Fe-4S] cluster as cofactor.

Its subcellular location is the cytoplasm. It catalyses the reaction cytidine(32) in tRNA + S-sulfanyl-L-cysteinyl-[cysteine desulfurase] + AH2 + ATP = 2-thiocytidine(32) in tRNA + L-cysteinyl-[cysteine desulfurase] + A + AMP + diphosphate + H(+). It functions in the pathway tRNA modification. In terms of biological role, catalyzes the ATP-dependent 2-thiolation of cytidine in position 32 of tRNA, to form 2-thiocytidine (s(2)C32). The sulfur atoms are provided by the cysteine/cysteine desulfurase (IscS) system. The sequence is that of tRNA-cytidine(32) 2-sulfurtransferase from Mannheimia succiniciproducens (strain KCTC 0769BP / MBEL55E).